Here is a 104-residue protein sequence, read N- to C-terminus: Large ribosomal subunit protein eL42 (104 aa).

It belongs to the eukaryotic ribosomal protein eL42 family. Component of the large ribosomal subunit. Mature ribosomes consist of a small (40S) and a large (60S) subunit. The 40S subunit contains about 32 different proteins and 1 molecule of RNA (18S). The 60S subunit contains about 42 different proteins and 3 molecules of RNA (28S, 5.8S and 5S).

It localises to the cytoplasm. Component of the ribosome, a large ribonucleoprotein complex responsible for the synthesis of proteins in the cell. The small ribosomal subunit (SSU) binds messenger RNAs (mRNAs) and translates the encoded message by selecting cognate aminoacyl-transfer RNA (tRNA) molecules. The large subunit (LSU) contains the ribosomal catalytic site termed the peptidyl transferase center (PTC), which catalyzes the formation of peptide bonds, thereby polymerizing the amino acids delivered by tRNAs into a polypeptide chain. The nascent polypeptides leave the ribosome through a tunnel in the LSU and interact with protein factors that function in enzymatic processing, targeting, and the membrane insertion of nascent chains at the exit of the ribosomal tunnel. This is Large ribosomal subunit protein eL42 from Plasmodium falciparum (isolate 3D7).